The chain runs to 213 residues: tRNA (guanine-N(7)-)-methyltransferase (213 aa).

Residues glutamate 44, glutamate 69, aspartate 96, and aspartate 118 each coordinate S-adenosyl-L-methionine. Aspartate 118 is an active-site residue. Substrate-binding positions include lysine 122, aspartate 154, and 191 to 194 (TEYE).

The protein belongs to the class I-like SAM-binding methyltransferase superfamily. TrmB family.

It carries out the reaction guanosine(46) in tRNA + S-adenosyl-L-methionine = N(7)-methylguanosine(46) in tRNA + S-adenosyl-L-homocysteine. Its pathway is tRNA modification; N(7)-methylguanine-tRNA biosynthesis. In terms of biological role, catalyzes the formation of N(7)-methylguanine at position 46 (m7G46) in tRNA. This is tRNA (guanine-N(7)-)-methyltransferase from Exiguobacterium sibiricum (strain DSM 17290 / CCUG 55495 / CIP 109462 / JCM 13490 / 255-15).